Consider the following 247-residue polypeptide: Segregation and condensation protein A (247 aa).

This sequence belongs to the ScpA family. As to quaternary structure, component of a cohesin-like complex composed of ScpA, ScpB and the Smc homodimer, in which ScpA and ScpB bind to the head domain of Smc. The presence of the three proteins is required for the association of the complex with DNA.

It localises to the cytoplasm. Functionally, participates in chromosomal partition during cell division. May act via the formation of a condensin-like complex containing Smc and ScpB that pull DNA away from mid-cell into both cell halves. The polypeptide is Segregation and condensation protein A (Lactobacillus gasseri (strain ATCC 33323 / DSM 20243 / BCRC 14619 / CIP 102991 / JCM 1131 / KCTC 3163 / NCIMB 11718 / NCTC 13722 / AM63)).